The chain runs to 188 residues: Elongation factor P (188 aa).

Residue K34 is modified to N6-(3,6-diaminohexanoyl)-5-hydroxylysine.

The protein belongs to the elongation factor P family. In terms of processing, may be beta-lysylated on the epsilon-amino group of Lys-34 by the combined action of EpmA and EpmB, and then hydroxylated on the C5 position of the same residue by EpmC (if this protein is present). Lysylation is critical for the stimulatory effect of EF-P on peptide-bond formation. The lysylation moiety may extend toward the peptidyltransferase center and stabilize the terminal 3-CCA end of the tRNA. Hydroxylation of the C5 position on Lys-34 may allow additional potential stabilizing hydrogen-bond interactions with the P-tRNA.

It is found in the cytoplasm. It participates in protein biosynthesis; polypeptide chain elongation. In terms of biological role, involved in peptide bond synthesis. Alleviates ribosome stalling that occurs when 3 or more consecutive Pro residues or the sequence PPG is present in a protein, possibly by augmenting the peptidyl transferase activity of the ribosome. Modification of Lys-34 is required for alleviation. The chain is Elongation factor P from Stenotrophomonas maltophilia (strain R551-3).